The primary structure comprises 301 residues: Probable alpha-L-glutamate ligase 2 (301 aa).

Residues 104–287 (LQLLSRKGIG…VTEPIVEYIE (184 aa)) form the ATP-grasp domain. Residues Lys141, 178 to 179 (EY), Asp187, and 211 to 213 (RSN) each bind ATP. Mg(2+) contacts are provided by Asp248, Glu260, and Asn262. 3 residues coordinate Mn(2+): Asp248, Glu260, and Asn262.

The protein belongs to the RimK family. It depends on Mg(2+) as a cofactor. The cofactor is Mn(2+).

In Shewanella baltica (strain OS195), this protein is Probable alpha-L-glutamate ligase 2.